Reading from the N-terminus, the 131-residue chain is Small ribosomal subunit protein bS6 (131 aa).

The segment at 98–131 (EASPMVKAKDERRERREDFANETADDSEAGDSEE) is disordered. The segment covering 104 to 116 (KAKDERRERREDF) has biased composition (basic and acidic residues). Residues 120 to 131 (TADDSEAGDSEE) are compositionally biased toward acidic residues.

It belongs to the bacterial ribosomal protein bS6 family.

Functionally, binds together with bS18 to 16S ribosomal RNA. In Klebsiella pneumoniae subsp. pneumoniae (strain ATCC 700721 / MGH 78578), this protein is Small ribosomal subunit protein bS6.